The following is a 750-amino-acid chain: MSDQITVDELWAECEQTFEDLFLNLKKGLSRKRYMEIYTKIYNYCSSANEKALIDFYIPKVKVLVAQKAVEIMSRSESYPNDALLLFFRNQWNEWKMSSNVLKNLLSPVNKIHSSDKKTTSSSANQNESVVYSDTLNSWRETAFNPLKNKLSVSLLQIIKNDRTGFSTNLQVLSDSLECYVQLGPEKNKLEIYQSCFEQQFLQETETFYKAESADFIEKNGVCEYMRHVYNRIEQETNRVNQYMPISTLEKLTKILNNVLISNYKEQFASKFLDILIEDKSSDLVMMYSLLSRVNHLTPLKNIFSDFIKSEGLKEIESNLKEAQEKPQVLISILLKIYSRFNIMIKECYGNDTDFTTAMDKSFSILVNENPASYDPKKKESNIPVVLSKFCDQILRKGPHHISDEAELEKKLTEAVCLFKYLPDKDIFMLNYQKMLSKRLVEDLSASEDAETLMINKLKNYQGFDYCTKLTRMITDMRLCKDININFQNHLNEKSLTLPYQFNFYVLTNGSWTLTNKQTATPFKPPSEMLSSITYFESFYKKSYQGRVLTFLYDFSRADVDSRQAKGKIYKLTTTAYQMAILLMFNGADKITRFLINDTIGLDETSIRLPLLALIKTGIIECSEPSFKNWNNDTEFTVNSKFSSKKMKVSCNIAVQIGETKQSEGQQTVSEQEIEKERFFKLQAAIVRIMKSKKTMTHNDLTVETTTQVSKWFTPKITAIKKAIEYLIDQEYIRRTTDDNPSARKYEYMA.

In terms of domain architecture, Cullin neddylation spans R678–D739. K691 participates in a covalent cross-link: Glycyl lysine isopeptide (Lys-Gly) (interchain with G-Cter in NEDD8).

It belongs to the cullin family. Neddylated; which enhances the ubiquitination activity of SCF-like complex.

Its pathway is protein modification; protein ubiquitination. Functionally, probable core component of cullin-based SCF-like E3 ubiquitin-protein ligase complexes which mediate the ubiquitination and subsequent proteasomal degradation of target proteins. The E3 ubiquitin-protein ligase activity of the complex is dependent on the neddylation of the cullin subunit. This is Cullin-5 (culE) from Dictyostelium discoideum (Social amoeba).